A 317-amino-acid chain; its full sequence is Methionyl-tRNA formyltransferase (317 aa).

112 to 115 (SLLP) lines the (6S)-5,6,7,8-tetrahydrofolate pocket.

Belongs to the Fmt family.

The catalysed reaction is L-methionyl-tRNA(fMet) + (6R)-10-formyltetrahydrofolate = N-formyl-L-methionyl-tRNA(fMet) + (6S)-5,6,7,8-tetrahydrofolate + H(+). In terms of biological role, attaches a formyl group to the free amino group of methionyl-tRNA(fMet). The formyl group appears to play a dual role in the initiator identity of N-formylmethionyl-tRNA by promoting its recognition by IF2 and preventing the misappropriation of this tRNA by the elongation apparatus. In Mycobacterium avium (strain 104), this protein is Methionyl-tRNA formyltransferase.